The following is a 115-amino-acid chain: U31-theraphotoxin-Cg1a (115 aa).

An N-terminal signal peptide occupies residues 1–18 (MKLCVIIIASLMVASVSG). Residues 19–51 (RLRKIKGTELDKKMLLEKLGHGMDIRFEETPRA) constitute a propeptide that is removed on maturation. Disulfide bonds link cysteine 52–cysteine 67, cysteine 60–cysteine 73, cysteine 64–cysteine 113, and cysteine 66–cysteine 86.

Belongs to the neurotoxin 03 (Tx2) family. 02 subfamily. As to expression, expressed by the venom gland.

It is found in the secreted. In terms of biological role, probable ion channel inhibitor. In Chilobrachys guangxiensis (Chinese earth tiger tarantula), this protein is U31-theraphotoxin-Cg1a.